The sequence spans 196 residues: Small ribosomal subunit protein uS4c (196 aa).

Residues 1 to 14 (MSRYRGPRLKKIRR) are compositionally biased toward basic residues. The interval 1–43 (MSRYRGPRLKKIRRLGALPGLTRKTPKSGSNPKKKFHSGKKEQ) is disordered. The S4 RNA-binding domain maps to 89–169 (MRLDNILFRL…LPKHLTIDTL (81 aa)).

Belongs to the universal ribosomal protein uS4 family. As to quaternary structure, part of the 30S ribosomal subunit. Contacts protein S5. The interaction surface between S4 and S5 is involved in control of translational fidelity.

Its subcellular location is the plastid. The protein resides in the chloroplast. Functionally, one of the primary rRNA binding proteins, it binds directly to 16S rRNA where it nucleates assembly of the body of the 30S subunit. Its function is as follows. With S5 and S12 plays an important role in translational accuracy. This Melica uniflora (Wood melick grass) protein is Small ribosomal subunit protein uS4c (rps4).